The primary structure comprises 338 residues: Bifunctional methylenetetrahydrofolate dehydrogenase/cyclohydrolase 2, mitochondrial (338 aa).

Residues 89-93 (YVRNK) and 136-138 (VQL) each bind substrate. NAD(+)-binding positions include 205–207 (GRS) and Arg-238. 314–318 (PGGVG) is a binding site for substrate.

The protein belongs to the tetrahydrofolate dehydrogenase/cyclohydrolase family. It depends on Mg(2+) as a cofactor. Widely expressed.

It localises to the mitochondrion inner membrane. It carries out the reaction (6R)-5,10-methylene-5,6,7,8-tetrahydrofolate + NAD(+) = (6R)-5,10-methenyltetrahydrofolate + NADH. It catalyses the reaction (6R)-5,10-methenyltetrahydrofolate + H2O = (6R)-10-formyltetrahydrofolate + H(+). The enzyme catalyses (6R)-5,10-methylene-5,6,7,8-tetrahydrofolate + NADP(+) = (6R)-5,10-methenyltetrahydrofolate + NADPH. The protein operates within one-carbon metabolism; tetrahydrofolate interconversion. Bifunctional mitochondrial folate-interconverting enzyme that has both NAD/NADP-dependent methylenetetrahydrofolate dehydrogenase and methenyltetrahydrofolate cyclohydrolase activities. In Mus musculus (Mouse), this protein is Bifunctional methylenetetrahydrofolate dehydrogenase/cyclohydrolase 2, mitochondrial.